An 836-amino-acid polypeptide reads, in one-letter code: uncharacterized protein (836 aa).

Disordered regions lie at residues 1 to 25 (MDST…NEEE), 692 to 718 (DSRS…NNQR), and 789 to 836 (ESSG…GYAS). 2 stretches are compositionally biased toward polar residues: residues 789 to 799 (ESSGINVSNTR) and 825 to 836 (IDSSSAQNGYAS).

It localises to the nucleus. This is an uncharacterized protein from Schizosaccharomyces pombe (strain 972 / ATCC 24843) (Fission yeast).